A 516-amino-acid chain; its full sequence is ADP-ribosylation factor GTPase-activating protein 3 (516 aa).

In terms of domain architecture, Arf-GAP spans 10 to 126; the sequence is LTIFKRLRSV…IKSLASQATR (117 aa). The segment at 25–48 adopts a C4-type zinc-finger fold; it reads CFDCGAKNPSWASITYGVFLCIDC. The disordered stretch occupies residues 170-199; that stretch reads AEPSSLTSRPVETTLENNEGGQEQGPSVEG. Positions 173-194 are enriched in polar residues; the sequence is SSLTSRPVETTLENNEGGQEQG. S231 is subject to Phosphoserine. The stretch at 243-264 forms a coiled coil; the sequence is NEIEKQAQAADKMKEQEDLAKA. Phosphoserine is present on residues S270, S274, S331, and S370. Positions 392 to 414 are disordered; sequence KTTGYSDRPTARRKPDYEPVENT. Residues S428, S451, S453, S455, S457, and S458 each carry the phosphoserine modification.

The protein localises to the cytoplasm. It is found in the golgi apparatus membrane. GAP activity stimulated by phosphatidylinositol 4,5-bisphosphate (PIP2). Its function is as follows. GTPase-activating protein (GAP) for ADP ribosylation factor 1 (ARF1). Hydrolysis of ARF1-bound GTP may lead to dissociation of coatomer from Golgi-derived membranes to allow fusion with target membranes. In Macaca fascicularis (Crab-eating macaque), this protein is ADP-ribosylation factor GTPase-activating protein 3.